Reading from the N-terminus, the 87-residue chain is U3-theraphotoxin-Hhn1l (87 aa).

Positions 1–24 (MVNMKASMFLTFAGLVLLFVVCYA) are cleaved as a signal peptide. The propeptide occupies 25-52 (SESEEKEFPKEMLSSIFAVDNDFKQEER). Cystine bridges form between Cys-54–Cys-67, Cys-61–Cys-72, and Cys-66–Cys-79.

The protein belongs to the neurotoxin 10 (Hwtx-1) family. 51 (Hntx-8) subfamily. Hntx-8 sub-subfamily. Expressed by the venom gland.

The protein localises to the secreted. Ion channel inhibitor. This chain is U3-theraphotoxin-Hhn1l, found in Cyriopagopus hainanus (Chinese bird spider).